The primary structure comprises 748 residues: Catalase-peroxidase 2 (748 aa).

Residues 1–24 (MSSDTSDSRPPNPDTKTASTSESE) are compositionally biased toward polar residues. Positions 1–43 (MSSDTSDSRPPNPDTKTASTSESENPAIPSPKPKSGAPLRNQD) are disordered. Residues 113-238 (WHSAGTYRIH…YGATTMGLIY (126 aa)) constitute a cross-link (tryptophyl-tyrosyl-methioninium (Trp-Tyr) (with M-264)). The Proton acceptor role is filled by H114. A cross-link (tryptophyl-tyrosyl-methioninium (Tyr-Met) (with W-113)) is located at residues 238 to 264 (YVNPEGPEGQPDPLAAAHDIRETFGRM). Residue H279 coordinates heme b.

It belongs to the peroxidase family. Peroxidase/catalase subfamily. As to quaternary structure, homotetramer. The cofactor is heme b. Formation of the three residue Trp-Tyr-Met cross-link is important for the catalase, but not the peroxidase activity of the enzyme.

The catalysed reaction is H2O2 + AH2 = A + 2 H2O. It carries out the reaction 2 H2O2 = O2 + 2 H2O. Bifunctional enzyme with both catalase and broad-spectrum peroxidase activity. May play a role in the intracellular survival of mycobacteria. This Mycolicibacterium smegmatis (strain ATCC 700084 / mc(2)155) (Mycobacterium smegmatis) protein is Catalase-peroxidase 2.